The sequence spans 419 residues: MPVRRRWYPPSSTAAQPSPDGGDVNTDDADACPSSRQQRPPSLPQHSAPIHHRRRVINSIDASGEVMEYGSSNDQRMQDMEIWPSDGGGVEEYDPWTAWLYKPHTVSVLLAGACLLIWASGVLHPEITSSHDKVIPIKRGVWAMIAVFLAYCTLQAPSTILIRPHPAVWRLVHGMAVVYLVALTFLLFQKRDDARQFMKHLHPGLGVELPERSYGSDCRMYVPENPTNRFINIQETLFDEFVIAHVLGWWGKAVMIRNQLLLWVLSVGFELMELTFRHMLPNFNECWWDSIILDIMICNWFGIWAGMHTVRYFDGKTYEWVGLSRQPSIMGKVKRSLCQFTPAKWDKDQWHPFMEPRRFIQVFCLCVGFMTVELNTFFLKFCLWIPPRNPLVVYRLILWWLIAIPAIREYNTYLQDRSS.

A disordered region spans residues 1 to 51 (MPVRRRWYPPSSTAAQPSPDGGDVNTDDADACPSSRQQRPPSLPQHSAPIH). Low complexity predominate over residues 33–47 (PSSRQQRPPSLPQHS). The next 7 membrane-spanning stretches (helical) occupy residues 103-123 (PHTV…SGVL), 142-162 (WAMI…TILI), 168-188 (VWRL…FLLF), 260-280 (LLLW…RHML), 287-307 (WWDS…WAGM), 359-379 (FIQV…TFFL), and 384-404 (WIPP…LIAI).

The protein belongs to the CDP-alcohol phosphatidyltransferase class-I family.

Its subcellular location is the endoplasmic reticulum membrane. The enzyme catalyses a CDP-1,2-diacyl-sn-glycerol + L-serine = a 1,2-diacyl-sn-glycero-3-phospho-L-serine + CMP + H(+). Its pathway is phospholipid metabolism; phosphatidylethanolamine biosynthesis; phosphatidylethanolamine from CDP-diacylglycerol: step 1/2. Functionally, catalyzes a base-exchange reaction in which the polar head group of phosphatidylethanolamine (PE) or phosphatidylcholine (PC) is replaced by L-serine. The sequence is that of CDP-diacylglycerol--serine O-phosphatidyltransferase 3 (PSS3) from Oryza sativa subsp. japonica (Rice).